The chain runs to 430 residues: Adenylosuccinate synthetase (430 aa).

Residues 12–18 (GDEGKGK) and 40–42 (GHT) each bind GTP. The active-site Proton acceptor is the Asp13. Residues Asp13 and Gly40 each contribute to the Mg(2+) site. Residues 13–16 (DEGK), 38–41 (NAGH), Thr128, Arg142, Gln223, Thr238, and Arg302 contribute to the IMP site. His41 (proton donor) is an active-site residue. Position 298–304 (298–304 (VNTGRKR)) interacts with substrate. Residues Arg304, 330 to 332 (KLD), and 412 to 414 (GVG) contribute to the GTP site.

It belongs to the adenylosuccinate synthetase family. Homodimer. Mg(2+) serves as cofactor.

The protein localises to the cytoplasm. It catalyses the reaction IMP + L-aspartate + GTP = N(6)-(1,2-dicarboxyethyl)-AMP + GDP + phosphate + 2 H(+). The protein operates within purine metabolism; AMP biosynthesis via de novo pathway; AMP from IMP: step 1/2. Functionally, plays an important role in the de novo pathway of purine nucleotide biosynthesis. Catalyzes the first committed step in the biosynthesis of AMP from IMP. This is Adenylosuccinate synthetase from Corynebacterium aurimucosum (strain ATCC 700975 / DSM 44827 / CIP 107346 / CN-1) (Corynebacterium nigricans).